Here is a 640-residue protein sequence, read N- to C-terminus: 1,4-alpha-glucan branching enzyme GlgB (640 aa).

Residue aspartate 318 is the Nucleophile of the active site. The active-site Proton donor is the glutamate 371.

Belongs to the glycosyl hydrolase 13 family. GlgB subfamily. Monomer.

It carries out the reaction Transfers a segment of a (1-&gt;4)-alpha-D-glucan chain to a primary hydroxy group in a similar glucan chain.. The protein operates within glycan biosynthesis; glycogen biosynthesis. Its function is as follows. Catalyzes the formation of the alpha-1,6-glucosidic linkages in glycogen by scission of a 1,4-alpha-linked oligosaccharide from growing alpha-1,4-glucan chains and the subsequent attachment of the oligosaccharide to the alpha-1,6 position. In Francisella tularensis subsp. novicida (strain U112), this protein is 1,4-alpha-glucan branching enzyme GlgB.